We begin with the raw amino-acid sequence, 177 residues long: MNAAIRDKNIVLIGFMGVGKTTIGQLVSKKLGRDFIDIDHEIEKDFQMTIPEMFQQKGEAFFRQTEKEYIFQMCEHTMGNIVSLGGGAFQQEEIRKKCLEHCFVIFLDLRWENWKQRMDLLIENRPVLHNRTIEEMKQLFNERKSIYAFHHLKVETDNRSAEETADYIVEMLKLGQS.

17 to 22 contributes to the ATP binding site; that stretch reads GVGKTT. T21 contributes to the Mg(2+) binding site. Positions 39, 63, and 86 each coordinate substrate. R125 is an ATP binding site. Residue R143 participates in substrate binding. R159 is an ATP binding site.

Belongs to the shikimate kinase family. Monomer. It depends on Mg(2+) as a cofactor.

It is found in the cytoplasm. It catalyses the reaction shikimate + ATP = 3-phosphoshikimate + ADP + H(+). It functions in the pathway metabolic intermediate biosynthesis; chorismate biosynthesis; chorismate from D-erythrose 4-phosphate and phosphoenolpyruvate: step 5/7. Functionally, catalyzes the specific phosphorylation of the 3-hydroxyl group of shikimic acid using ATP as a cosubstrate. This chain is Shikimate kinase, found in Bacillus licheniformis (strain ATCC 14580 / DSM 13 / JCM 2505 / CCUG 7422 / NBRC 12200 / NCIMB 9375 / NCTC 10341 / NRRL NRS-1264 / Gibson 46).